A 389-amino-acid polypeptide reads, in one-letter code: MIVEPKFRGFICTTSHPTGCKKNVENQIEYVKENGKIEGAKRVLVLGASTGYGLASAIVASEACDAEVLGVSFEREAKGKRTASAGWYNIESLKKFSEGEGKKFISVNGDAFSNEVKSEVIDLIKENMGKVDLVIYSLAAPKRKDPVSGEVYSSCLKTVGAPFTSKTLDFHTGEIQDITINPATEEEIEGTRKVMGGEDWMLWIEALKEADVLEKGVKTIAYSYIGPEVTYPIYREGTIGRAKNDLEKTAGEINKVLKSLDGEGYISVNKALVTQASSAIPIVSLYISILYKVMKEKGTHEGCIEQIYRMFKELYEGKLNLDSENRIRIDDLEMAEDVQKAIEEIWPQITSENVFELSDAEDFKKEFFKLFGFGLEGVDYSEDVDITTV.

NAD(+) contacts are provided by residues 47–52 (GASTGY), 73–74 (FE), 110–111 (DA), and 138–139 (LA). Tyr-224 is a substrate binding site. Tyr-234 serves as the catalytic Proton donor. NAD(+) is bound by residues Lys-243 and 272-274 (LVT).

Belongs to the TER reductase family. As to quaternary structure, monomer.

It catalyses the reaction a 2,3-saturated acyl-CoA + NAD(+) = a (2E)-enoyl-CoA + NADH + H(+). Its pathway is lipid metabolism; fatty acid biosynthesis. Its function is as follows. Involved in the fatty acid synthesis (FAS II). Catalyzes the reduction of a carbon-carbon double bond in an enoyl moiety that is covalently linked to a coenzyme A (CoA). The sequence is that of Trans-2-enoyl-CoA reductase [NADH] from Clostridium perfringens (strain ATCC 13124 / DSM 756 / JCM 1290 / NCIMB 6125 / NCTC 8237 / Type A).